Here is a 159-residue protein sequence, read N- to C-terminus: 2-C-methyl-D-erythritol 2,4-cyclodiphosphate synthase (159 aa).

Residues aspartate 8 and histidine 10 each contribute to the a divalent metal cation site. 4-CDP-2-C-methyl-D-erythritol 2-phosphate is bound by residues 8 to 10 and 34 to 35; these read DVH and HS. Histidine 42 provides a ligand contact to a divalent metal cation. 4-CDP-2-C-methyl-D-erythritol 2-phosphate is bound by residues 56–58, 132–135, and arginine 142; these read DIG and TTTE.

It belongs to the IspF family. In terms of assembly, homotrimer. It depends on a divalent metal cation as a cofactor.

The enzyme catalyses 4-CDP-2-C-methyl-D-erythritol 2-phosphate = 2-C-methyl-D-erythritol 2,4-cyclic diphosphate + CMP. Its pathway is isoprenoid biosynthesis; isopentenyl diphosphate biosynthesis via DXP pathway; isopentenyl diphosphate from 1-deoxy-D-xylulose 5-phosphate: step 4/6. Involved in the biosynthesis of isopentenyl diphosphate (IPP) and dimethylallyl diphosphate (DMAPP), two major building blocks of isoprenoid compounds. Catalyzes the conversion of 4-diphosphocytidyl-2-C-methyl-D-erythritol 2-phosphate (CDP-ME2P) to 2-C-methyl-D-erythritol 2,4-cyclodiphosphate (ME-CPP) with a corresponding release of cytidine 5-monophosphate (CMP). The chain is 2-C-methyl-D-erythritol 2,4-cyclodiphosphate synthase from Chlorobium phaeobacteroides (strain BS1).